We begin with the raw amino-acid sequence, 559 residues long: O-fucosyltransferase 37 (559 aa).

A helical; Signal-anchor for type II membrane protein transmembrane segment spans residues 53–73 (FFLLLISLSLVFSGISFLTFS). N126 carries N-linked (GlcNAc...) asparagine glycosylation. 331-333 (HLR) lines the substrate pocket. Residues N372, N403, N447, and N504 are each glycosylated (N-linked (GlcNAc...) asparagine).

The protein belongs to the glycosyltransferase GT106 family.

It is found in the membrane. It participates in glycan metabolism. The chain is O-fucosyltransferase 37 from Arabidopsis thaliana (Mouse-ear cress).